Consider the following 244-residue polypeptide: Phosphate propanoyltransferase (244 aa).

A CoA-binding site is contributed by 52–54 (ISA). Positions 56 and 58 each coordinate Zn(2+). Arg106 contributes to the CoA binding site. Arg112 provides a ligand contact to phosphate. Residues Glu118, His166, His168, and His214 each contribute to the Zn(2+) site. CoA is bound at residue Asn221.

The protein belongs to the PduL family. In terms of assembly, full-length protein forms large oligomers. Possible homotrimer and monomer, when purified in the absence of the encapsulation peptide (EP, residues 1-20). The EP may influence oligomerization. Requires Zn(2+) as cofactor.

Its subcellular location is the bacterial microcompartment. It catalyses the reaction propanoyl-CoA + phosphate = propanoyl phosphate + CoA. Part of a bacterial microcompartment (BMC) locus required for growth on plant and algal sugars, including L-fucose and L-rhamnose. Thought to be active on lactyl-CoA in a lactaldehyde-degradation pathway. CoA is regenerated within the BMC via this enzyme, although there must also be cofactor transport across the BMC. Directly targeted to the BMC. This chain is Phosphate propanoyltransferase, found in Planctopirus limnophila (strain ATCC 43296 / DSM 3776 / IFAM 1008 / Mu 290) (Planctomyces limnophilus).